The chain runs to 344 residues: Phenylalanine--tRNA ligase alpha subunit (344 aa).

Residue E256 coordinates Mg(2+).

Belongs to the class-II aminoacyl-tRNA synthetase family. Phe-tRNA synthetase alpha subunit type 1 subfamily. Tetramer of two alpha and two beta subunits. Mg(2+) serves as cofactor.

Its subcellular location is the cytoplasm. It carries out the reaction tRNA(Phe) + L-phenylalanine + ATP = L-phenylalanyl-tRNA(Phe) + AMP + diphosphate + H(+). In Bacillus pumilus (strain SAFR-032), this protein is Phenylalanine--tRNA ligase alpha subunit.